The following is a 515-amino-acid chain: GMP synthase [glutamine-hydrolyzing] (515 aa).

Residues 6–198 (KVIIIDYGSQ…LFHVAKLKAD (193 aa)) enclose the Glutamine amidotransferase type-1 domain. Catalysis depends on Cys-83, which acts as the Nucleophile. Catalysis depends on residues His-172 and Glu-174. A GMPS ATP-PPase domain is found at 199–390 (WTMSSFVERA…LGLPDFIIWR (192 aa)). Residue 226 to 232 (SGGIDST) participates in ATP binding.

Homodimer.

It carries out the reaction XMP + L-glutamine + ATP + H2O = GMP + L-glutamate + AMP + diphosphate + 2 H(+). It participates in purine metabolism; GMP biosynthesis; GMP from XMP (L-Gln route): step 1/1. In terms of biological role, catalyzes the synthesis of GMP from XMP. The protein is GMP synthase [glutamine-hydrolyzing] of Nitratidesulfovibrio vulgaris (strain DSM 19637 / Miyazaki F) (Desulfovibrio vulgaris).